A 233-amino-acid chain; its full sequence is DNA repair protein RecO (233 aa).

Belongs to the RecO family.

Its function is as follows. Involved in DNA repair and RecF pathway recombination. This is DNA repair protein RecO from Francisella philomiragia subsp. philomiragia (strain ATCC 25017 / CCUG 19701 / FSC 153 / O#319-036).